Reading from the N-terminus, the 396-residue chain is NADH-quinone oxidoreductase subunit D (396 aa).

The protein belongs to the complex I 49 kDa subunit family. As to quaternary structure, NDH-1 is composed of 14 different subunits. Subunits NuoB, C, D, E, F, and G constitute the peripheral sector of the complex.

It localises to the cell inner membrane. It catalyses the reaction a quinone + NADH + 5 H(+)(in) = a quinol + NAD(+) + 4 H(+)(out). In terms of biological role, NDH-1 shuttles electrons from NADH, via FMN and iron-sulfur (Fe-S) centers, to quinones in the respiratory chain. The immediate electron acceptor for the enzyme in this species is believed to be ubiquinone. Couples the redox reaction to proton translocation (for every two electrons transferred, four hydrogen ions are translocated across the cytoplasmic membrane), and thus conserves the redox energy in a proton gradient. The protein is NADH-quinone oxidoreductase subunit D of Bartonella tribocorum (strain CIP 105476 / IBS 506).